Consider the following 300-residue polypeptide: Iron-dependent extradiol dioxygenase (300 aa).

VOC domains follow at residues 5–120 (SLAY…AFHG) and 142–270 (GLGH…FGCE). Residue His-145 participates in Fe cation binding. 4 residues coordinate substrate: His-200, His-215, Asp-250, and Tyr-256. A Fe cation-binding site is contributed by His-215. Glu-266 contacts Fe cation.

Belongs to the extradiol ring-cleavage dioxygenase family. In terms of assembly, homodimer. Fe(2+) serves as cofactor.

It carries out the reaction 3,4-dihydroxy-9,10-secoandrosta-1,3,5(10)-triene-9,17-dione + O2 = (1E,2Z)-3-hydroxy-5,9,17-trioxo-4,5:9,10-disecoandrosta-1(10),2-dien-4-oate + H(+). The protein operates within steroid metabolism; cholesterol metabolism. Its function is as follows. Catalyzes the meta-cleavage of 3,4-dihydroxy-9,10-seconandrost-1,3,5(10)-triene-9,17-dione (3,4-DHSA) to produce 4,5-9,10-diseco-3-hydroxy-5,9,17-trioxoandrosta-1(10),2-diene-4-oic acid (4,9-DSHA). Also involved in biphenyl and polychlorinated biphenyls (PCBs) degradation. The sequence is that of Iron-dependent extradiol dioxygenase (hsaC) from Rhodococcus jostii (strain RHA1).